The following is a 214-amino-acid chain: Oocyte zinc finger protein XlCOF10 (214 aa).

7 C2H2-type zinc fingers span residues 1-23 (FSCS…RQLH), 29-51 (FTCS…HRIH), 57-79 (FTCD…QKSH), 85-107 (FCCS…QRTH), 113-135 (FTCT…QKSH), 141-163 (FSCS…QRIH), and 169-191 (FSCS…EKCH).

This sequence belongs to the krueppel C2H2-type zinc-finger protein family.

It localises to the nucleus. Functionally, may be involved in transcriptional regulation. In Xenopus laevis (African clawed frog), this protein is Oocyte zinc finger protein XlCOF10.